Consider the following 120-residue polypeptide: Peptidyl-tRNA hydrolase (120 aa).

Belongs to the PTH2 family.

It localises to the cytoplasm. The enzyme catalyses an N-acyl-L-alpha-aminoacyl-tRNA + H2O = an N-acyl-L-amino acid + a tRNA + H(+). In terms of biological role, the natural substrate for this enzyme may be peptidyl-tRNAs which drop off the ribosome during protein synthesis. The protein is Peptidyl-tRNA hydrolase of Sulfolobus acidocaldarius (strain ATCC 33909 / DSM 639 / JCM 8929 / NBRC 15157 / NCIMB 11770).